The following is a 178-amino-acid chain: Fatty-acid and retinol-binding protein 1 (178 aa).

The signal sequence occupies residues 1-16 (MYHQLILMALIGVIMA). 2 N-linked (GlcNAc...) asparagine glycosylation sites follow: asparagine 44 and asparagine 75. Coiled-coil stretches lie at residues 67 to 89 (DAALEALKNTSDKLYQKAVELRN) and 122 to 154 (QKLDMEKLKQAARDIIAKYEALNEETREELKAT). Residue asparagine 157 is glycosylated (N-linked (GlcNAc...) asparagine).

The protein belongs to the fatty-acid and retinol-binding protein (FARBP) family. N-glycosylated.

It is found in the secreted. Binds retinol and different fatty acids. This Onchocerca dukei (Filarial nematode worm) protein is Fatty-acid and retinol-binding protein 1.